The chain runs to 625 residues: Archaeosine synthase subunit alpha (625 aa).

In terms of domain architecture, PUA spans 556–624 (KYVVKIDDFV…VAVDVRHVKK (69 aa)).

This sequence belongs to the archaeosine synthase type 1 family. In terms of assembly, forms a robust complex with the archaeosine synthase beta subunit RaSEA. Formation of this complex highly increases lysine transfer activity. The complex likely consists of an alpha(2)beta(2) heterotetrameric structure.

It carries out the reaction 7-cyano-7-carbaguanosine(15) in tRNA + L-lysine = 7-N-[(5S)-5-amino-5-carboxypentyl]formamidino-7-deazaguanosine(15) in tRNA. It participates in tRNA modification; archaeosine-tRNA biosynthesis. In terms of biological role, functions in the biosynthesis of archaeosine, a modified nucleoside present in the dihydrouridine loop (D-loop) of archaeal tRNAs. Catalyzes the addition of L-lysine to the cyano group of 7-cyano-7-deazaguanine (preQ0)-modified tRNAs at position 15, to generate q0kN15-tRNA, a q0N lysine adduct identified as 7-N-[(5S)-5-amino-5-carboxypentyl]formamidino-7-deazaguanosine. The sequence is that of Archaeosine synthase subunit alpha from Methanosarcina acetivorans (strain ATCC 35395 / DSM 2834 / JCM 12185 / C2A).